Reading from the N-terminus, the 161-residue chain is Transcription initiation factor TFIID subunit 12 (161 aa).

The tract at residues 15–55 (FSSIKPEPASTPPQGSMANSTAVVKIPGTPGAGGRLSPENN) is disordered. A Glycyl lysine isopeptide (Lys-Gly) (interchain with G-Cter in SUMO2) cross-link involves residue Lys-19. Polar residues predominate over residues 26–36 (PPQGSMANSTA). Residue Thr-43 is modified to Phosphothreonine. Residue Ser-51 is modified to Phosphoserine. Residue Thr-59 is modified to Phosphothreonine. The Histone-fold domain occupies 59 to 126 (TKKKLQDLVR…QLHLERQWNM (68 aa)).

It belongs to the TAF12 family. In terms of assembly, component of the TFIID basal transcription factor complex, composed of TATA-box-binding protein TBP, and a number of TBP-associated factors (TAFs), including TAF1, TAF2, TAF3, TAF4, TAF5, TAF6, TAF7, TAF8, TAF9, TAF10, TAF11, TAF12 and TAF13. Component of the TATA-binding protein-free TAF complex (TFTC), the PCAF histone acetylase complex and the STAGA transcription coactivator-HAT complex. Component of the PCAF complex, at least composed of TADA2L/ADA2, TADA3L/ADA3, TAF5L/PAF65-beta, SUPT3H, TAF6L, TAF9, TAF10, TAF12 and TRRAP. Component of the STAGA transcription coactivator-HAT complex, at least composed of SUPT3H, GCN5L2, TAF5L, TAF6L, STAF65-gamma/SUPT7L, TADA3L, TAD1L, TAF10, TAF12, TRRAP and TAF9. Interacts with ATF7 (via the transactivation domain); the interaction is prevented by sumoylation of ATF7. Interacts with TBP; the interaction is direct. Interacts with TAF10; the interaction is direct. Interacts with ATF7, promoting transactivation by ATF7. As to quaternary structure, does not promote the transactivation of ATF7. As to expression, ubiquitous.

It localises to the nucleus. In terms of biological role, the TFIID basal transcription factor complex plays a major role in the initiation of RNA polymerase II (Pol II)-dependent transcription. TFIID recognizes and binds promoters with or without a TATA box via its subunit TBP, a TATA-box-binding protein, and promotes assembly of the pre-initiation complex (PIC). The TFIID complex consists of TBP and TBP-associated factors (TAFs), including TAF1, TAF2, TAF3, TAF4, TAF5, TAF6, TAF7, TAF8, TAF9, TAF10, TAF11, TAF12 and TAF13. Component of the TATA-binding protein-free TAF complex (TFTC), the PCAF histone acetylase complex and the STAGA transcription coactivator-HAT complex. The chain is Transcription initiation factor TFIID subunit 12 from Homo sapiens (Human).